Here is a 225-residue protein sequence, read N- to C-terminus: Uracil-DNA glycosylase (225 aa).

Asp65 acts as the Proton acceptor in catalysis.

This sequence belongs to the uracil-DNA glycosylase (UDG) superfamily. UNG family.

Its subcellular location is the cytoplasm. The enzyme catalyses Hydrolyzes single-stranded DNA or mismatched double-stranded DNA and polynucleotides, releasing free uracil.. In terms of biological role, excises uracil residues from the DNA which can arise as a result of misincorporation of dUMP residues by DNA polymerase or due to deamination of cytosine. The protein is Uracil-DNA glycosylase of Clostridium botulinum (strain Alaska E43 / Type E3).